The primary structure comprises 586 residues: Arginine--tRNA ligase (586 aa).

The 'HIGH' region motif lies at 127-137 (PNVAKEMHVGH).

Belongs to the class-I aminoacyl-tRNA synthetase family. As to quaternary structure, monomer.

Its subcellular location is the cytoplasm. The catalysed reaction is tRNA(Arg) + L-arginine + ATP = L-arginyl-tRNA(Arg) + AMP + diphosphate. This is Arginine--tRNA ligase (argS) from Streptomyces coelicolor (strain ATCC BAA-471 / A3(2) / M145).